The sequence spans 81 residues: Putative membrane protein insertion efficiency factor (81 aa).

Belongs to the UPF0161 family.

It is found in the cell inner membrane. Its function is as follows. Could be involved in insertion of integral membrane proteins into the membrane. This is Putative membrane protein insertion efficiency factor from Pseudomonas savastanoi pv. phaseolicola (strain 1448A / Race 6) (Pseudomonas syringae pv. phaseolicola (strain 1448A / Race 6)).